The sequence spans 370 residues: Flagellar P-ring protein (370 aa).

The signal sequence occupies residues 1-21 (MRLFSVVLAVFTLLLPSQAFA).

Belongs to the FlgI family. The basal body constitutes a major portion of the flagellar organelle and consists of four rings (L,P,S, and M) mounted on a central rod.

It localises to the periplasm. Its subcellular location is the bacterial flagellum basal body. In terms of biological role, assembles around the rod to form the L-ring and probably protects the motor/basal body from shearing forces during rotation. The sequence is that of Flagellar P-ring protein from Alteromonas mediterranea (strain DSM 17117 / CIP 110805 / LMG 28347 / Deep ecotype).